Reading from the N-terminus, the 377-residue chain is Homoserine O-succinyltransferase (377 aa).

Residues 50–358 (NAILVCHALS…PSTYGHDSFL (309 aa)) enclose the AB hydrolase-1 domain. Ser-156 (nucleophile) is an active-site residue. Arg-226 contacts substrate. Residues Asp-321 and His-354 contribute to the active site. A substrate-binding site is contributed by Asp-355.

It belongs to the AB hydrolase superfamily. MetX family. Homodimer.

Its subcellular location is the cytoplasm. The catalysed reaction is L-homoserine + succinyl-CoA = O-succinyl-L-homoserine + CoA. Its pathway is amino-acid biosynthesis; L-methionine biosynthesis via de novo pathway; O-succinyl-L-homoserine from L-homoserine: step 1/1. Transfers a succinyl group from succinyl-CoA to L-homoserine, forming succinyl-L-homoserine. The polypeptide is Homoserine O-succinyltransferase (Nitrosomonas eutropha (strain DSM 101675 / C91 / Nm57)).